The sequence spans 204 residues: Imidazoleglycerol-phosphate dehydratase (204 aa).

The protein belongs to the imidazoleglycerol-phosphate dehydratase family.

It localises to the cytoplasm. It catalyses the reaction D-erythro-1-(imidazol-4-yl)glycerol 3-phosphate = 3-(imidazol-4-yl)-2-oxopropyl phosphate + H2O. Its pathway is amino-acid biosynthesis; L-histidine biosynthesis; L-histidine from 5-phospho-alpha-D-ribose 1-diphosphate: step 6/9. This is Imidazoleglycerol-phosphate dehydratase from Corynebacterium jeikeium (strain K411).